We begin with the raw amino-acid sequence, 669 residues long: DNA ligase (669 aa).

NAD(+) is bound by residues 34-38 (DAEYD), 83-84 (SL), and E114. K116 (N6-AMP-lysine intermediate) is an active-site residue. The NAD(+) site is built by R137, E171, K287, and K311. Positions 405, 408, 423, and 428 each coordinate Zn(2+). The region spanning 591-669 (NVESYFAGKT…EERFLQELNK (79 aa)) is the BRCT domain.

It belongs to the NAD-dependent DNA ligase family. LigA subfamily. Requires Mg(2+) as cofactor. The cofactor is Mn(2+).

It catalyses the reaction NAD(+) + (deoxyribonucleotide)n-3'-hydroxyl + 5'-phospho-(deoxyribonucleotide)m = (deoxyribonucleotide)n+m + AMP + beta-nicotinamide D-nucleotide.. In terms of biological role, DNA ligase that catalyzes the formation of phosphodiester linkages between 5'-phosphoryl and 3'-hydroxyl groups in double-stranded DNA using NAD as a coenzyme and as the energy source for the reaction. It is essential for DNA replication and repair of damaged DNA. The chain is DNA ligase from Bacillus cereus (strain ATCC 14579 / DSM 31 / CCUG 7414 / JCM 2152 / NBRC 15305 / NCIMB 9373 / NCTC 2599 / NRRL B-3711).